The chain runs to 524 residues: Bifunctional purine biosynthesis protein PurH (524 aa).

The 145-residue stretch at 1–145 (MIQQALLSVS…KNHRDVTVIV (145 aa)) folds into the MGS-like domain.

Belongs to the PurH family.

The catalysed reaction is (6R)-10-formyltetrahydrofolate + 5-amino-1-(5-phospho-beta-D-ribosyl)imidazole-4-carboxamide = 5-formamido-1-(5-phospho-D-ribosyl)imidazole-4-carboxamide + (6S)-5,6,7,8-tetrahydrofolate. It carries out the reaction IMP + H2O = 5-formamido-1-(5-phospho-D-ribosyl)imidazole-4-carboxamide. It functions in the pathway purine metabolism; IMP biosynthesis via de novo pathway; 5-formamido-1-(5-phospho-D-ribosyl)imidazole-4-carboxamide from 5-amino-1-(5-phospho-D-ribosyl)imidazole-4-carboxamide (10-formyl THF route): step 1/1. The protein operates within purine metabolism; IMP biosynthesis via de novo pathway; IMP from 5-formamido-1-(5-phospho-D-ribosyl)imidazole-4-carboxamide: step 1/1. The chain is Bifunctional purine biosynthesis protein PurH from Ralstonia nicotianae (strain ATCC BAA-1114 / GMI1000) (Ralstonia solanacearum).